Consider the following 481-residue polypeptide: Trigger factor (481 aa).

In terms of domain architecture, PPIase FKBP-type spans glycine 174–proline 261. The segment at glutamate 430–serine 481 is disordered. The segment covering lysine 437–lysine 447 has biased composition (basic and acidic residues). A compositionally biased stretch (basic residues) spans lysine 462–threonine 471. A compositionally biased stretch (basic and acidic residues) spans alanine 472–serine 481.

It belongs to the FKBP-type PPIase family. Tig subfamily.

The protein resides in the cytoplasm. The enzyme catalyses [protein]-peptidylproline (omega=180) = [protein]-peptidylproline (omega=0). Functionally, involved in protein export. Acts as a chaperone by maintaining the newly synthesized protein in an open conformation. Functions as a peptidyl-prolyl cis-trans isomerase. The sequence is that of Trigger factor from Synechococcus sp. (strain WH7803).